Reading from the N-terminus, the 3470-residue chain is Dynein axonemal heavy chain 5 (3470 aa).

Positions 1–1938 are stem; sequence MFRIGRRQLW…MIHITDVAFT (1938 aa). The tract at residues 899 to 918 is disordered; it reads EKVRHENASPNGDTSGGGEG. AAA regions lie at residues 1939-2161, 2221-2440, 2547-2800, and 2913-3167; these read YQNE…VLRT, TAIS…IQNL, VYPP…IWQG, and LYNE…FRRS. ATP contacts are provided by residues 1977–1984 and 2259–2266; these read GPAGTGKT and GPSGSGKT. Coiled coils occupy residues 3207 to 3241 and 3434 to 3468; these read LKEA…VLKE and HALA…AMTE.

The protein belongs to the dynein heavy chain family. Interacts with DNAL1. Consists of at least two heavy chains and a number of intermediate and light chains.

It is found in the cytoplasm. Its subcellular location is the cytoskeleton. The protein resides in the cilium axoneme. Force generating protein of respiratory cilia. Produces force towards the minus ends of microtubules. Dynein has ATPase activity; the force-producing power stroke is thought to occur on release of ADP. Required for structural and functional integrity of the cilia of ependymal cells lining the brain ventricles. This is Dynein axonemal heavy chain 5 from Rattus norvegicus (Rat).